A 261-amino-acid chain; its full sequence is 3-methyl-2-oxobutanoate hydroxymethyltransferase (261 aa).

Mg(2+) is bound by residues D42 and D81. Residues 42-43, D81, and K110 each bind 3-methyl-2-oxobutanoate; that span reads DS. E112 serves as a coordination point for Mg(2+). The Proton acceptor role is filled by E179.

Belongs to the PanB family. In terms of assembly, homodecamer; pentamer of dimers. Mg(2+) is required as a cofactor.

The protein resides in the cytoplasm. The catalysed reaction is 3-methyl-2-oxobutanoate + (6R)-5,10-methylene-5,6,7,8-tetrahydrofolate + H2O = 2-dehydropantoate + (6S)-5,6,7,8-tetrahydrofolate. The protein operates within cofactor biosynthesis; coenzyme A biosynthesis. In terms of biological role, catalyzes the reversible reaction in which hydroxymethyl group from 5,10-methylenetetrahydrofolate is transferred onto alpha-ketoisovalerate to form ketopantoate. This chain is 3-methyl-2-oxobutanoate hydroxymethyltransferase, found in Pyrobaculum neutrophilum (strain DSM 2338 / JCM 9278 / NBRC 100436 / V24Sta) (Thermoproteus neutrophilus).